The following is a 102-amino-acid chain: Small ribosomal subunit protein bS20 (102 aa).

The protein belongs to the bacterial ribosomal protein bS20 family.

Binds directly to 16S ribosomal RNA. The protein is Small ribosomal subunit protein bS20 of Gloeobacter violaceus (strain ATCC 29082 / PCC 7421).